The following is a 380-amino-acid chain: Deoxyguanosinetriphosphate triphosphohydrolase-like protein (380 aa).

A disordered region spans residues 1-28; sequence MYAPYATMPDRSRGRAVPEEESSFRSPF. Residues 62–198 enclose the HD domain; sequence RLTHSIEVGQ…AALADDIAYN (137 aa).

The protein belongs to the dGTPase family. Type 2 subfamily.

The chain is Deoxyguanosinetriphosphate triphosphohydrolase-like protein from Ruegeria sp. (strain TM1040) (Silicibacter sp.).